We begin with the raw amino-acid sequence, 731 residues long: MVHASLWQFRLQIIPWRLRNFCFLTSQCPYTSISSPDTVSVSSYYSLTSNNDQSLFHYFDHLLGLCLTAQQCRQVHAQVLLSDFIFRSGSLAANLISVYARLGLLLDARNVFETVSLVLLSDLRLWNSILKANVSHGLYENALELYRGMRQRGLTGDGYILPLILRACRYLGRFGLCRAFHTQVIQIGLKENLHVVNELLTLYPKAGRMGDAYNLFVEMPVRNRMSWNVMIKGFSQEYDCESAVKIFEWMQREEFKPDEVTWTSVLSCHSQCGKFEDVLKYFHLMRMSGNAVSGEALAVFFSVCAELEALSIAEKVHGYVIKGGFEEYLPSRNALIHVYGKQGKVKDAEHLFRQIRNKGIESWNSLITSFVDAGKLDEALSLFSELEEMNHVCNVKANVVTWTSVIKGCNVQGRGDDSLEYFRQMQFSKVLANSVTICCILSICAELPALNLGREIHGHVIRTSMSENILVQNALVNMYAKCGLLSEGSLVFEAIRDKDLISWNSIIKGYGMHGFAEKALSMFDRMISSGFHPDGIALVAVLSACSHAGLVEKGREIFYSMSKRFGLEPQQEHYACIVDLLGRVGFLKEASEIVKNMPMEPKVCVLGALLNSCRMHKNVDIAEGIASQLSVLEPERTGSYMLLSNIYSAGGRWEESANVRALAKKKDLKKVSGSSWIEVKKKKYKFSSGSIVQSEFETIYPVLEDLVSHMLKKGPTHDGNNYEDDLDLWTA.

15 PPR repeats span residues serine 88–valine 118, aspartate 122–glycine 156, aspartate 157–glutamate 191, asparagine 192–arginine 222, asparagine 223–proline 257, aspartate 258–valine 292, serine 293–glutamate 327, tyrosine 328–lysine 358, glycine 359–cysteine 393, asparagine 398–alanine 432, asparagine 433–glutamate 467, asparagine 468–lysine 498, aspartate 499–proline 533, aspartate 534–proline 569, and glutamine 570–glutamate 600. Residues valine 605–lysine 680 form a type E motif region. The type E(+) motif stretch occupies residues lysine 681–leucine 711.

It belongs to the PPR family. PCMP-E subfamily.

In Arabidopsis thaliana (Mouse-ear cress), this protein is Putative pentatricopeptide repeat-containing protein At1g17630 (PCMP-E72).